The primary structure comprises 282 residues: uncharacterized protein (282 aa).

Residues 1 to 77 (MNGLLRIRQR…LALSEALASQ (77 aa)) form the HTH rpiR-type domain. Positions 37-56 (SQQLANEAGVSQSSVVKFAQ) form a DNA-binding region, H-T-H motif. The SIS domain maps to 125–265 (CVTMLRSARR…FIALIQQDLE (141 aa)).

This is an uncharacterized protein from Escherichia coli (strain K12).